A 705-amino-acid chain; its full sequence is Tryptophan synthase (705 aa).

The interval 1 to 293 (MEAIKKVFEQ…QLTPNAETAK (293 aa)) is tryptophan synthase alpha chain. Active-site proton acceptor residues include Glu49 and Asp60. The interval 266–287 (KGEPSRVRSPGAAQRTPSQLTP) is disordered. The interval 294–705 (GVENILPARF…HVSSNAIPSK (412 aa)) is tryptophan synthase beta chain. Lys381 is modified (N6-(pyridoxal phosphate)lysine).

It in the N-terminal section; belongs to the TrpA family. In the C-terminal section; belongs to the TrpB family. It depends on pyridoxal 5'-phosphate as a cofactor.

The catalysed reaction is (1S,2R)-1-C-(indol-3-yl)glycerol 3-phosphate + L-serine = D-glyceraldehyde 3-phosphate + L-tryptophan + H2O. Its pathway is amino-acid biosynthesis; L-tryptophan biosynthesis; L-tryptophan from chorismate: step 5/5. The sequence is that of Tryptophan synthase (TRP-1) from Coprinopsis cinerea (Inky cap fungus).